The chain runs to 449 residues: Probable phosphoglucosamine mutase (449 aa).

S101 (phosphoserine intermediate) is an active-site residue. The Mg(2+) site is built by S101, D239, D241, and D243. A Phosphoserine modification is found at S101.

This sequence belongs to the phosphohexose mutase family. Mg(2+) serves as cofactor. Activated by phosphorylation.

The catalysed reaction is alpha-D-glucosamine 1-phosphate = D-glucosamine 6-phosphate. Its function is as follows. Catalyzes the conversion of glucosamine-6-phosphate to glucosamine-1-phosphate. In Methanothermobacter thermautotrophicus (strain ATCC 29096 / DSM 1053 / JCM 10044 / NBRC 100330 / Delta H) (Methanobacterium thermoautotrophicum), this protein is Probable phosphoglucosamine mutase.